We begin with the raw amino-acid sequence, 113 residues long: Putative membrane protein insertion efficiency factor (113 aa).

The protein belongs to the UPF0161 family.

It localises to the cell inner membrane. Functionally, could be involved in insertion of integral membrane proteins into the membrane. This chain is Putative membrane protein insertion efficiency factor, found in Campylobacter concisus (strain 13826).